A 534-amino-acid chain; its full sequence is EH domain-containing protein 1 (534 aa).

At Met1 the chain carries N-acetylmethionine. In terms of domain architecture, Dynamin-type G spans Phe55–Pro286. Residues Gly65 to Thr72 form a G1 motif region. Residue Gly65–Thr72 coordinates ATP. The tract at residues Glu91 to Pro92 is G2 motif. Residues Asp153–Gly156 are G3 motif. The stretch at Asp198 to Gln227 forms a coiled coil. The segment at Asn219–Asp222 is G4 motif. Lys220 lines the ATP pocket. Position 243 (Ile243) is a region of interest, G5 motif. Trp258 contacts ATP. The region spanning Asp444–Arg532 is the EH domain. Ser456 carries the post-translational modification Phosphoserine. The 36-residue stretch at Leu476–Lys511 folds into the EF-hand domain. Residues Asp489, Asp491, Asp493, and Glu500 each coordinate Ca(2+).

The protein belongs to the TRAFAC class dynamin-like GTPase superfamily. Dynamin/Fzo/YdjA family. EHD subfamily. As to quaternary structure, homooligomer, and heterooligomer with EHD2, EHD3 and EHD4, ATP-binding is required for heterooligomerization. Interacts (via EH domain) with MICALL1 (via NPF1 motif); the interaction is direct and recruits EHD1 to membranes. Interacts with RAB35; the interaction is indirect through MICALL1 and recruits EHD1 to membranes. Interacts (via EH domain) with PACSIN2 (via NPF motifs); regulates localization to tubular recycling endosome membranes. Interacts with PACSIN1. Interacts with RAB8A. Interacts with FER1L5 (via second C2 domain). Interacts with MYOF. Interacts with ZFYVE20. Interacts (via EH domain) with RAB11FIP2.

It localises to the recycling endosome membrane. It is found in the early endosome membrane. The protein resides in the cell membrane. Its subcellular location is the cell projection. The protein localises to the cilium membrane. Its function is as follows. ATP- and membrane-binding protein that controls membrane reorganization/tubulation upon ATP hydrolysis. Acts in early endocytic membrane fusion and membrane trafficking of recycling endosomes. Recruited to endosomal membranes upon nerve growth factor stimulation, indirectly regulates neurite outgrowth. Plays a role in myoblast fusion. Involved in the unidirectional retrograde dendritic transport of endocytosed BACE1 and in efficient sorting of BACE1 to axons implicating a function in neuronal APP processing. Plays a role in the formation of the ciliary vesicle (CV), an early step in cilium biogenesis. Proposed to be required for the fusion of distal appendage vesicles (DAVs) to form the CV by recruiting SNARE complex component SNAP29. Is required for recruitment of transition zone proteins CEP290, RPGRIP1L, TMEM67 and B9D2, and of IFT20 following DAV reorganization before Rab8-dependent ciliary membrane extension. Required for the loss of CCP110 form the mother centriole essential for the maturation of the basal body during ciliogenesis. The protein is EH domain-containing protein 1 of Bos taurus (Bovine).